The following is a 237-amino-acid chain: Putative HTH-type transcriptional regulator ycf28 (237 aa).

The HTH crp-type domain occupies 155-228; the sequence is KSITNRLISL…KKKVIIHDPI (74 aa). The segment at residues 188–207 is a DNA-binding region (H-T-H motif); that stretch reads HKVLAQIIGSNRVSITRIIS.

The protein localises to the plastid. The protein resides in the chloroplast. The protein is Putative HTH-type transcriptional regulator ycf28 (ycf28) of Porphyra purpurea (Red seaweed).